We begin with the raw amino-acid sequence, 424 residues long: GTPase Obg (424 aa).

The region spanning 1 to 158 is the Obg domain; that stretch reads MFVDKARIFV…RWISLELKLL (158 aa). The OBG-type G domain occupies 159–331; sequence ADVGLIGFPN…LLKECARVLS (173 aa). Residues 165 to 172, 190 to 194, 212 to 215, 282 to 285, and 312 to 314 each bind GTP; these read GFPNVGKS, FTTIT, DIPG, NKAD, and SAA. Residues Ser-172 and Thr-192 each contribute to the Mg(2+) site. In terms of domain architecture, OCT spans 345-424; it reads RFVPEDKHFT…LNDFEFEFLK (80 aa).

The protein belongs to the TRAFAC class OBG-HflX-like GTPase superfamily. OBG GTPase family. As to quaternary structure, monomer. Requires Mg(2+) as cofactor.

The protein resides in the cytoplasm. In terms of biological role, an essential GTPase which binds GTP, GDP and possibly (p)ppGpp with moderate affinity, with high nucleotide exchange rates and a fairly low GTP hydrolysis rate. Plays a role in control of the cell cycle, stress response, ribosome biogenesis and in those bacteria that undergo differentiation, in morphogenesis control. This is GTPase Obg from Clostridium acetobutylicum (strain ATCC 824 / DSM 792 / JCM 1419 / IAM 19013 / LMG 5710 / NBRC 13948 / NRRL B-527 / VKM B-1787 / 2291 / W).